We begin with the raw amino-acid sequence, 608 residues long: ATM1-type heavy metal exporter (608 aa).

The Cytoplasmic segment spans residues 1–38 (MPPETATNPKDARHDGWQTLKRFLPYLWPADNAVLRRR). Residues 39–60 (VVGAILMVLLGKATTLALPFAY) traverse the membrane as a helical segment. One can recognise an ABC transmembrane type-1 domain in the interval 39–327 (VVGAILMVLL…LGMVYRTIRQ (289 aa)). The Periplasmic segment spans residues 61–82 (KKAVDAMTLGGGAQPALTVALA). Residues 83 to 105 (FVLAYALGRFSGVLFDNLRNIVF) form a helical membrane-spanning segment. Topologically, residues 106 to 154 (ERVGQDATRHLAENVFARLHKLSLRFHLARRTGEVTKVIERGTKSIDTM) are cytoplasmic. Residues 155 to 178 (LYFLLFNIAPTVIELTAVIVIFWL) form a helical membrane-spanning segment. A topological domain (periplasmic) is located at residue asparagine 179. The chain crosses the membrane as a helical span at residues 180-202 (FGLGLVTATILAVIAYVWTTRTI). At 203-266 (TEWRTHLREK…AAVKSENSLG (64 aa)) the chain is on the cytoplasmic side. Glutathione is bound by residues 206-210 (RTHLR) and 269-272 (NIAQ). The helical transmembrane segment at 267–285 (LLNIAQALIVNLLMAGAMA) threads the bilayer. Residues 286 to 300 (WTVYGWSQGKLTVGD) lie on the Periplasmic side of the membrane. Residues 301–322 (LVFVNTYLTQLFRPLDMLGMVY) traverse the membrane as a helical segment. Position 316–319 (316–319 (DMLG)) interacts with glutathione. Over 323–608 (RTIRQGLIDM…ESAEVSEAAE (286 aa)) the chain is Cytoplasmic. Positions 361–595 (VTFDNVVFGY…DGLYAEMWAR (235 aa)) constitute an ABC transporter domain. ATP-binding positions include tyrosine 370 and 394-405 (GPSGAGKSTIAR).

Belongs to the ABC transporter superfamily. ABCB family. Heavy Metal importer (TC 3.A.1.210) subfamily. In terms of assembly, homodimer.

It localises to the cell inner membrane. Functionally, mediates the ATP-dependent export of glutathione-conjugated substrates, such as heavy metal-glutathione conjugates. ATP hydrolysis is stimulated by glutathione binding. Protects cells against toxic heavy metal ions, such as silver and mercury ions. May also mediate the transport of glutathione-conjugated aromatic hydrocarbons, such as dinitrobenzene. In Novosphingobium aromaticivorans (strain ATCC 700278 / DSM 12444 / CCUG 56034 / CIP 105152 / NBRC 16084 / F199), this protein is ATM1-type heavy metal exporter (atm1).